Reading from the N-terminus, the 460-residue chain is MGESVLSRLGQWISSTPLRSLDRAYEAALRIKAIEDRYFQGGSIGSNGNHGQNTSRYFQIQLRQELRQIDLSLAEFRASSVFSRLPDPEQNGSGPPFSSDKDQAKEAPVGPSENDGKDAENGRQSRDPSILEKLEFIDQVTSRYKRPAAQPRSTSPPPKSQEQPEPLTSSQPEPSDPSIKTNLAKTNLDNSNAPVASKTALLPRSILRTANQIRRELSSQAEEELLQEYRSQRTRTLVAVRFLLLLAILPLLVQIFSKHFLFGPLVDRFQPREPTILALSYEFQEKALSEFEFFKEKIEFERALHHQSPELDLESEDQLSKKAEELLQKYSRKNLEGLKNVLADVLSLLVFGWLILIGREEIEVLKSFLDRLIYGLSDSAKAFIIILFTDVFVGYHSPHGWEVLLSSLAAHLGLPENRNFIYGFIATFPVFLDTLFKYWIFRYLNRVSPSAVATYHAMND.

The segment at 84-194 (RLPDPEQNGS…KTNLDNSNAP (111 aa)) is disordered. The segment covering 114-136 (NDGKDAENGRQSRDPSILEKLEF) has biased composition (basic and acidic residues). A compositionally biased stretch (polar residues) spans 167 to 194 (LTSSQPEPSDPSIKTNLAKTNLDNSNAP). 4 consecutive transmembrane segments (helical) span residues 242 to 262 (FLLLLAILPLLVQIFSKHFLF), 337 to 357 (GLKNVLADVLSLLVFGWLILI), 373 to 393 (IYGLSDSAKAFIIILFTDVFV), and 420 to 440 (FIYGFIATFPVFLDTLFKYWI).

This sequence belongs to the CemA family.

The protein localises to the cell inner membrane. Functionally, required for H(+) efflux immediately after light irradiation to form a rapid H(+) concentration gradient across the thylakoid membranes. Together with PxcL, contributes to transient H(+) uptake following dark to light transition. The chain is Proton extrusion protein PxcA from Synechococcus sp. (strain JA-3-3Ab) (Cyanobacteria bacterium Yellowstone A-Prime).